The chain runs to 704 residues: Translational regulator orb2 (704 aa).

Residues 1-64 (MDSLKLPKAN…PPGLGSSTPI (64 aa)) are disordered. A gln/His-rich region spans residues 1–87 (MDSLKLPKAN…ILQSFHHSKH (87 aa)). A compositionally biased stretch (low complexity) spans 9–42 (ANSATSSASGSNSNLSGSTSASASAATSPTSSGT). Phosphoserine occurs at positions 74, 88, and 100. Disordered regions lie at residues 82-106 (FHHSKHSPSGGASGGGDASPTSNLL), 166-266 (LPNL…GVSP), and 417-438 (SPSRLSPHSPHSPIQGGNGGNV). The interval 163–240 (CGGLPNLNLN…PSSPGGGGGG (78 aa)) is gln/His-rich. Low complexity-rich tracts occupy residues 176–205 (QLHQQQHQQQHQQHQQHQQQQQLHQHQQQL), 218–233 (QQQQLRESGGSHSPSS), and 417–429 (SPSRLSPHSPHSP). Phosphoserine occurs at positions 425 and 428. RRM domains follow at residues 447-538 (RKVF…PWRL) and 555-637 (KTVF…PYVL).

As to quaternary structure, monomer. Upon neuronal stimulation, forms stable amyloid-like oligomers composed of isoform A and isoform B which are required for formation of persistent long-term memory. Isoform A is critical for oligomer formation. Phe-5 of isoform A is required for amyloid-like oligomerization. Rapidly forms amyloids and toxic intermediates are extremely transient. Unlike in the adult nervous system, remains monomeric in the early embryo. Interacts with the translational regulator bol. Interacts with Tob; the interaction is enhanced by neuronal stimulation, stabilizes isoform A and induces oligomerization. In terms of processing, phosphorylation regulates interaction with Tob and oligomerization. Protein phosphatase 2A keeps both Orb2 and Tob in an unphosphorylated form. Following synaptic activation, unphosphorylated Orb2 is bound and stabilized by unphosphorylated Tob. Tob recruits activated LimK which phosphorylates both Orb2 and Tob and enhances Orb2 oligomerization. In terms of tissue distribution, broadly expressed throughout the nervous system of embryo, larva and adult including the ventral nerve cord and brain (at protein level). In early embryos, deposited maternally and distributed uniformly throughout the embryo until the extended germband stage. By mid-embryogenesis, highest levels are found in the central and peripheral nervous systems with lower expression also detected in the ectoderm and mesoderm. In adults, high levels are present in the head and body of both sexes with higher expression in testis than ovary. In the ovary, expressed in both germ and follicle cells. In adult head, predominantly neuronal with broad expression throughout the brain and ventral ganglia including the mushroom body.

It is found in the perikaryon. Its subcellular location is the cell projection. The protein resides in the axon. It localises to the dendrite. The protein localises to the synapse. It is found in the cytoplasm. Its subcellular location is the perinuclear region. Functionally, RNA-binding protein involved in translational regulation and required for long-term memory. Required in mushroom body gamma neurons for long-term memory in male courtship. Binds to mRNA 3'-UTRs. In its monomeric form, acts as a translational repressor of genes involved in neuronal growth, synapse formation and protein turnover. In its amyloid-like oligomeric form, acts as a translational activator. The monomeric form reduces poly(A) tail length and destabilizes mRNA while the oligomeric form protects and elongates the poly(A) tail and stabilizes mRNA. Involved in asymmetric cell division in the central nervous system. Plays a role in synapse formation and morphology at neuromuscular junctions by modulating the translation of the tumor suppressor brat. Required for the progression of spermatogenesis through meiosis and for sperm differentiation. During sperm differentiation, required to asymmetrically localize and activate the translation of protein kinase aPKC mRNAs which is necessary for spermatid cyst polarization. Also required during spermatid cyst polarization for localization and translation of its own mRNA. In terms of biological role, required for initial memory acquisition. Following subsequent late dopaminergic pathway activation, recruits isoform B into a complex to activate translation of CaMKII which is required for long-term memory consolidation. The protein is Translational regulator orb2 of Drosophila melanogaster (Fruit fly).